We begin with the raw amino-acid sequence, 328 residues long: Olfactory receptor 2AJ1 (328 aa).

Topologically, residues 1–25 (MGHQNHTFSSDFILLGLFSSSPTSV) are extracellular. Asparagine 5 carries N-linked (GlcNAc...) asparagine glycosylation. Residues 26-49 (VFFLVLFVIFIMSVTENTLMILLI) form a helical membrane-spanning segment. Residues 50–57 (RSDSRLHT) lie on the Cytoplasmic side of the membrane. The chain crosses the membrane as a helical span at residues 58 to 79 (PMYFLLSHLSLMDILHVSNIVP). The Extracellular portion of the chain corresponds to 80-100 (KMVTNFLSGSRTISFAGCGFQ). Residues cysteine 97 and cysteine 189 are joined by a disulfide bond. A helical transmembrane segment spans residues 101 to 120 (VFLSLTLLGGECLLLAAMSC). Topologically, residues 121 to 139 (DRYVAICHPLRYPILMKEY) are cytoplasmic. Residues 140 to 158 (ASALMAGGSWLIGVFNSTV) traverse the membrane as a helical segment. Topologically, residues 159 to 195 (HTAYALQFPFCGSRAIDHFFCEVPAMLKLSCADTTRY) are extracellular. Residues 196–219 (ERGVCVSAVIFLLIPFSLISASYG) form a helical membrane-spanning segment. Over 220-236 (QIILTVLQMKSSEARKK) the chain is Cytoplasmic. The chain crosses the membrane as a helical span at residues 237-259 (SFSTCSFHMIVVTMYYGPFIFTY). At 260–272 (MRPKSYHTPGQDK) the chain is on the extracellular side. A helical transmembrane segment spans residues 273 to 292 (FLAIFYTILTPTLNPFIYSF). Over 293–328 (RNKDVLAVMKNMLKSNFLHKKMNRKIPECVFCLFLC) the chain is Cytoplasmic.

It belongs to the G-protein coupled receptor 1 family.

The protein localises to the cell membrane. In terms of biological role, odorant receptor. This Homo sapiens (Human) protein is Olfactory receptor 2AJ1 (OR2AJ1).